A 328-amino-acid chain; its full sequence is tRNA N6-adenosine threonylcarbamoyltransferase (328 aa).

Residues H111 and H115 each contribute to the Fe cation site. Substrate-binding positions include 133-137 (LVSGG), D166, G179, D183, and N270. Fe cation is bound at residue D296.

It belongs to the KAE1 / TsaD family. Fe(2+) serves as cofactor.

It localises to the cytoplasm. It carries out the reaction L-threonylcarbamoyladenylate + adenosine(37) in tRNA = N(6)-L-threonylcarbamoyladenosine(37) in tRNA + AMP + H(+). Required for the formation of a threonylcarbamoyl group on adenosine at position 37 (t(6)A37) in tRNAs that read codons beginning with adenine. Is involved in the transfer of the threonylcarbamoyl moiety of threonylcarbamoyl-AMP (TC-AMP) to the N6 group of A37, together with TsaE and TsaB. TsaD likely plays a direct catalytic role in this reaction. The chain is tRNA N6-adenosine threonylcarbamoyltransferase from Phytoplasma australiense.